A 232-amino-acid polypeptide reads, in one-letter code: 5'-methylthioadenosine/S-adenosylhomocysteine nucleosidase (232 aa).

Residue E12 is the Proton acceptor of the active site. Substrate contacts are provided by residues G78, I152, and 173–174; that span reads ME. Catalysis depends on D197, which acts as the Proton donor.

The protein belongs to the PNP/UDP phosphorylase family. MtnN subfamily. In terms of assembly, homodimer.

It carries out the reaction S-adenosyl-L-homocysteine + H2O = S-(5-deoxy-D-ribos-5-yl)-L-homocysteine + adenine. The catalysed reaction is S-methyl-5'-thioadenosine + H2O = 5-(methylsulfanyl)-D-ribose + adenine. It catalyses the reaction 5'-deoxyadenosine + H2O = 5-deoxy-D-ribose + adenine. It functions in the pathway amino-acid biosynthesis; L-methionine biosynthesis via salvage pathway; S-methyl-5-thio-alpha-D-ribose 1-phosphate from S-methyl-5'-thioadenosine (hydrolase route): step 1/2. Functionally, catalyzes the irreversible cleavage of the glycosidic bond in both 5'-methylthioadenosine (MTA) and S-adenosylhomocysteine (SAH/AdoHcy) to adenine and the corresponding thioribose, 5'-methylthioribose and S-ribosylhomocysteine, respectively. Also cleaves 5'-deoxyadenosine, a toxic by-product of radical S-adenosylmethionine (SAM) enzymes, into 5-deoxyribose and adenine. Thus, is required for in vivo function of the radical SAM enzymes biotin synthase and lipoic acid synthase, that are inhibited by 5'-deoxyadenosine accumulation. This Escherichia coli O7:K1 (strain IAI39 / ExPEC) protein is 5'-methylthioadenosine/S-adenosylhomocysteine nucleosidase.